Consider the following 122-residue polypeptide: ATP synthase epsilon chain (122 aa).

This sequence belongs to the ATPase epsilon chain family. In terms of assembly, F-type ATPases have 2 components, CF(1) - the catalytic core - and CF(0) - the membrane proton channel. CF(1) has five subunits: alpha(3), beta(3), gamma(1), delta(1), epsilon(1). CF(0) has three main subunits: a, b and c.

It localises to the cell membrane. Produces ATP from ADP in the presence of a proton gradient across the membrane. This Rhodococcus opacus (strain B4) protein is ATP synthase epsilon chain.